Consider the following 280-residue polypeptide: 2-dehydro-3-deoxyphosphooctonate aldolase 2 (280 aa).

This sequence belongs to the KdsA family.

The protein localises to the cytoplasm. The catalysed reaction is D-arabinose 5-phosphate + phosphoenolpyruvate + H2O = 3-deoxy-alpha-D-manno-2-octulosonate-8-phosphate + phosphate. It functions in the pathway carbohydrate biosynthesis; 3-deoxy-D-manno-octulosonate biosynthesis; 3-deoxy-D-manno-octulosonate from D-ribulose 5-phosphate: step 2/3. Its pathway is bacterial outer membrane biogenesis; lipopolysaccharide biosynthesis. In Pseudomonas putida (strain ATCC 47054 / DSM 6125 / CFBP 8728 / NCIMB 11950 / KT2440), this protein is 2-dehydro-3-deoxyphosphooctonate aldolase 2 (kdsA2).